An 86-amino-acid polypeptide reads, in one-letter code: Neurotoxin LmNaTx34.2 (86 aa).

An N-terminal signal peptide occupies residues 1–18 (MKTLILVVIALMVIEVKS). Residues 19–85 (DGYLMVRAGR…IWTYEKNTCS (67 aa)) form the LCN-type CS-alpha/beta domain. 4 disulfides stabilise this stretch: Cys-32–Cys-84, Cys-36–Cys-57, Cys-43–Cys-64, and Cys-47–Cys-66.

This sequence belongs to the long (4 C-C) scorpion toxin superfamily. Sodium channel inhibitor family. Beta subfamily. Expressed by the venom gland.

Its subcellular location is the secreted. Its function is as follows. Binds voltage-independently at site-4 of sodium channels (Nav) and shift the voltage of activation toward more negative potentials thereby affecting sodium channel activation and promoting spontaneous and repetitive firing. This chain is Neurotoxin LmNaTx34.2, found in Lychas mucronatus (Chinese swimming scorpion).